The following is a 218-amino-acid chain: OPA3-like protein (218 aa).

A coiled-coil region spans residues 129-179; it reads NEIMEKQFVLQKKKNELQSSTEEIDSTEKDFDELHKVILKVERELHTLRQN. The segment at 175–218 is disordered; it reads TLRQNTPSQNEQAEATPSKEIPRETVSEKADHPPSSNTKSVSTG. The segment covering 176 to 189 has biased composition (polar residues); it reads LRQNTPSQNEQAEA. Positions 194–206 are enriched in basic and acidic residues; sequence EIPRETVSEKADH. Residues 208-218 are compositionally biased toward polar residues; that stretch reads PSSNTKSVSTG.

The protein belongs to the OPA3 family.

The protein is OPA3-like protein of Schizosaccharomyces pombe (strain 972 / ATCC 24843) (Fission yeast).